We begin with the raw amino-acid sequence, 634 residues long: DNA mismatch repair protein MutL (634 aa).

Positions 406 to 427 (HTHHNDTKGSVHTKSFSARSSS) are disordered.

This sequence belongs to the DNA mismatch repair MutL/HexB family.

In terms of biological role, this protein is involved in the repair of mismatches in DNA. It is required for dam-dependent methyl-directed DNA mismatch repair. May act as a 'molecular matchmaker', a protein that promotes the formation of a stable complex between two or more DNA-binding proteins in an ATP-dependent manner without itself being part of a final effector complex. This Anaplasma phagocytophilum (strain HZ) protein is DNA mismatch repair protein MutL.